Reading from the N-terminus, the 326-residue chain is AA10 family lytic polysaccharide monooxygenase C (326 aa).

Positions 1-32 (MVFSNSNASVSLFRLVALVATLSHLVFTFVDA) are cleaved as a signal peptide. 2 residues coordinate Cu(2+): His-33 and His-118. Residues 33 to 200 (HGYVTFPASR…ANAFYQCLDL (168 aa)) form the Chitin-binding type-4 domain. Cys-81 and Cys-197 form a disulfide bridge. N-linked (GlcNAc...) asparagine glycosylation is found at Asn-206, Asn-215, Asn-266, and Asn-303. Residues 206–326 (NSSSSSSSSN…KSQMRRDRQG (121 aa)) are disordered. Positions 207–281 (SSSSSSSSNS…NNGGSSGSTT (75 aa)) are enriched in low complexity.

It belongs to the polysaccharide monooxygenase AA10 family. Cu(2+) is required as a cofactor.

It is found in the secreted. Lytic polysaccharide monooxygenase (LPMO) that oxidatively cleaves alpha- and beta-chitin with C1 regioselectivity. Catalysis by LPMOs requires the reduction of the active-site copper from Cu(II) to Cu(I) by a reducing agent and H(2)O(2) or O(2) as a cosubstrate. Exhibits enzymatic activity on U.maydis fungal cell wall chitin and Boosts chitin hydrolysis by chitinase GH18A. In Mycosarcoma maydis (Corn smut fungus), this protein is AA10 family lytic polysaccharide monooxygenase C.